An 813-amino-acid polypeptide reads, in one-letter code: Leucine--tRNA ligase (813 aa).

A 'HIGH' region motif is present at residues 41-51; it reads PYPSGTLHMGH. The short motif at 575–579 is the 'KMSKS' region element; the sequence is KMSKS. Lys-578 contacts ATP.

This sequence belongs to the class-I aminoacyl-tRNA synthetase family.

Its subcellular location is the cytoplasm. It carries out the reaction tRNA(Leu) + L-leucine + ATP = L-leucyl-tRNA(Leu) + AMP + diphosphate. The chain is Leucine--tRNA ligase from Francisella tularensis subsp. tularensis (strain WY96-3418).